The primary structure comprises 379 residues: MDNLANQGVIVLAAGGTGGHLFPAEALAHELRARGWDVHLATDARAQRFVGAFAQDHVHVIRSATIAGRNPVALLKTFWSLWQGNLDSRKLFRRLKPKLVVGFGGYPTLPPLYAASNMGIPTLIHEQNAVMGRANKGLAGRVKAIAGGFLPENSGAYAAKTVITGNPVRPPVLVAAATPYTPAGKDDRFRLLVFGGSQGAQFFSQAIPAAVALLPEHERARLLITQQARKEDEASARKAYEKLGVPADVAPFFNDMPARMADAHFVIARSGASTVSEITVIGRPAMLVPFPHALDHDQAANAAALAAAGGAEVVRQADLSPQRLAEMLQSAMNEPERLEQQAKAAKSVGKPDAARLLADLAEAIASGKTVQEFKEGNRP.

UDP-N-acetyl-alpha-D-glucosamine contacts are provided by residues T17–G19, N128, R169, S197, and Q298.

Belongs to the glycosyltransferase 28 family. MurG subfamily.

It localises to the cell inner membrane. It carries out the reaction di-trans,octa-cis-undecaprenyl diphospho-N-acetyl-alpha-D-muramoyl-L-alanyl-D-glutamyl-meso-2,6-diaminopimeloyl-D-alanyl-D-alanine + UDP-N-acetyl-alpha-D-glucosamine = di-trans,octa-cis-undecaprenyl diphospho-[N-acetyl-alpha-D-glucosaminyl-(1-&gt;4)]-N-acetyl-alpha-D-muramoyl-L-alanyl-D-glutamyl-meso-2,6-diaminopimeloyl-D-alanyl-D-alanine + UDP + H(+). Its pathway is cell wall biogenesis; peptidoglycan biosynthesis. Cell wall formation. Catalyzes the transfer of a GlcNAc subunit on undecaprenyl-pyrophosphoryl-MurNAc-pentapeptide (lipid intermediate I) to form undecaprenyl-pyrophosphoryl-MurNAc-(pentapeptide)GlcNAc (lipid intermediate II). This Brucella canis (strain ATCC 23365 / NCTC 10854 / RM-666) protein is UDP-N-acetylglucosamine--N-acetylmuramyl-(pentapeptide) pyrophosphoryl-undecaprenol N-acetylglucosamine transferase.